The following is a 440-amino-acid chain: Diels-Alderase mycB (440 aa).

Residues 1 to 18 form the signal peptide; the sequence is MGYLVKLACGLLLPLATA. Residues N80, N155, and N332 are each glycosylated (N-linked (GlcNAc...) asparagine).

It belongs to the Diels-Alderase family.

It carries out the reaction (5S)-5-(2-methylpropyl)-3-[(2E,6R,8E,10E,12E)-6,8,10,12-tetramethyltetradeca-2,8,10,12-tetraenoyl]-2,5-dihydro-1H-pyrrol-2-one = (5S)-3-[(1S,2R,4aR,6R,8aS)-2-(but-2-en-2-yl)-3,4a,6-trimethyl-1,2,4a,5,6,7,8,8a-octahydronaphthalene-1-carbonyl]-5-(2-methylpropyl)-2,5-dihydro-1H-pyrrol-2-one. It catalyses the reaction (5Z)-5-(2-methylpropylidene)-3-[(2E,6R,8E,10E,12E)-6,8,10,12-tetramethyltetradeca-2,8,10,12-tetraenoyl]-2,5-dihydro-1H-pyrrol-2-one = myceliothermophin E. It functions in the pathway mycotoxin biosynthesis. Functionally, diels-Alderase; part of the gene cluster that mediates the biosynthesis of myceliothermophins, mycotoxins that contain a trans-fused decalin ring system connected to a conjugated 3-pyrrolin-2-one moiety and that have potential anti-tumor properties. The polyketide synthase module (PKS) of the PKS-NRPS mycA is responsible for the synthesis of the octaketide backbone. The downstream nonribosomal peptide synthetase (NRPS) module then amidates the carboxyl end of the octaketide with a leucine. A reductase-like domain (R) at the C-terminus catalyzes the reductive release of the polyketide-amino acid intermediate. Because mycA lacks a designated enoylreductase (ER) domain, the required activity is provided the enoyl reductase mycC. Following mycA-catalyzed construction and release of aminoacyl polyketide aldehyde, Knoevenagel condensation yields the expected ketone. This C18 keto acyclic precursor is the substrate of the Diels-Alderase mycB, that catalyzes the Diels-Alder cycloaddition to produce myceliothermophin E. A yet unknown oxygenase involved in the production of myceliothermophin A, via substitution with a hydroxyl group at the C21, has still to be identified. This chain is Diels-Alderase mycB, found in Thermothelomyces thermophilus (strain ATCC 42464 / BCRC 31852 / DSM 1799) (Sporotrichum thermophile).